Consider the following 636-residue polypeptide: DNA-dependent metalloprotease SPRTN (636 aa).

The interval 19-42 (QETPAAGWPDEDCPSSKRRRVDPS) is disordered. Positions 76-183 (RAMFLQFNDK…ASGTNITIYH (108 aa)) constitute a SprT-like domain. Residue histidine 141 coordinates Zn(2+). Residue glutamate 142 is part of the active site. Residues histidine 145 and histidine 160 each contribute to the Zn(2+) site. Disordered stretches follow at residues 238–382 (TYTK…GKQR) and 398–430 (RGAS…PSGK). A compositionally biased stretch (basic and acidic residues) spans 241–268 (KIKEPENYGKTGKSDKQRDKMPATEMPK). Residues 272-281 (PPSSTSSSGS) are compositionally biased toward low complexity. An SHP-box motif is present at residues 290 to 298 (FSGRGFVLG). Polar residues predominate over residues 302-311 (QIPTNKQIQS). The span at 313 to 327 (PKAPPEPLHSPPDSP) shows a compositional bias: pro residues. Residues 341 to 374 (RLSSGTSNIPRKRSVGNTNAFINVNGSPVRISNG) show a composition bias toward polar residues. The segment covering 399–416 (GASAVGSSKSSTDASTAD) has biased composition (low complexity). Positions 451 to 458 (ESNISKYF) match the PIP-box motif. Residues 473–608 (TFGSPQKSAI…VRDQQANNPP (136 aa)) form a disordered region. Composition is skewed to polar residues over residues 492–523 (FGSN…SGSS) and 545–554 (SPRTSGTTPS). Residues 535-566 (SNFPSPRNIGSPRTSGTTPSGAKKRSWEEHNS) carry the Nuclear localization signal motif. Composition is skewed to basic and acidic residues over residues 559–570 (RSWEEHNSERVF) and 584–593 (TDKKREEVRS). The segment at 612–636 (TVHCPVCHIRLPESTINDHLDSCLL) adopts a UBZ4-type zinc-finger fold. Cysteine 615, cysteine 618, histidine 630, and cysteine 634 together coordinate Zn(2+).

This sequence belongs to the Spartan family. In terms of assembly, homodimer. Zn(2+) is required as a cofactor. In terms of processing, autocatalytically cleaved in response to double-stranded DNA-binding: autocatalytic cleavage takes place in trans and leads to inactivation.

Its subcellular location is the nucleus. It localises to the chromosome. With respect to regulation, DNA-binding activates the protease activity: single-stranded DNA-binding specifically activates ability to cleave covalent DNA-protein cross-links (DPCs). In contrast, double-stranded DNA-binding specifically activates autocatalytic cleavage, and subsequent inactivation. In terms of biological role, DNA-dependent metalloendopeptidase that mediates the proteolytic cleavage of covalent DNA-protein cross-links (DPCs) during DNA synthesis, thereby playing a key role in maintaining genomic integrity. DPCs are highly toxic DNA lesions that interfere with essential chromatin transactions, such as replication and transcription, and which are induced by reactive agents, such as UV light or formaldehyde. Associates with the DNA replication machinery and specifically removes DPCs during DNA synthesis. Catalyzes proteolytic cleavage of the hmces DNA-protein cross-link following unfolding by the brip1/fancj helicase. Acts as a pleiotropic protease for DNA-binding proteins cross-linked with DNA, such as top1, top2a, histones H3 and H4. Mediates degradation of DPCs that are not ubiquitinated, while it is not able to degrade ubiquitinated DPCs. SPRTN activation requires polymerase collision with DPCs followed by helicase bypass of DPCs. May also act as a 'reader' of ubiquitinated pcna: facilitates chromatin association of rad18 and is required for efficient pcna monoubiquitination, promoting a feed-forward loop to enhance pcna ubiquitination and translesion DNA synthesis. Acts as a regulator of translesion DNA synthesis by recruiting vcp/p97 to sites of DNA damage. This Danio rerio (Zebrafish) protein is DNA-dependent metalloprotease SPRTN.